Here is a 701-residue protein sequence, read N- to C-terminus: Heterodisulfide reductase subunit A-like protein (701 aa).

Residue Gly-152–Glu-175 coordinates FAD. The 30-residue stretch at Lys-239 to Phe-268 folds into the 4Fe-4S ferredoxin-type 1 domain. Cys-248, Cys-251, Cys-254, Cys-326, Cys-627, Cys-630, Cys-633, Cys-637, Cys-660, Cys-663, Cys-666, and Cys-670 together coordinate [4Fe-4S] cluster. 2 4Fe-4S ferredoxin-type domains span residues Leu-618–Tyr-647 and Met-651–Phe-680.

It belongs to the HdrA family. As to quaternary structure, the heterodisulfide reductase is composed of three subunits; HdlA, HdlB and HdlC. It forms a complex with the F420-non-reducing hydrogenase (Mvh), which provides the reducing equivalents to the heterodisulfide reductase. Requires [4Fe-4S] cluster as cofactor. The cofactor is FAD.

It is found in the cytoplasm. In terms of biological role, has oxidoreductase activity. The Hdl and Mvh subunits may together mediate electron transfer from hydrogen to an unidentified electron acceptor on the cytoplasmic side of the membrane. The polypeptide is Heterodisulfide reductase subunit A-like protein (hdlA) (Archaeoglobus profundus (strain DSM 5631 / JCM 9629 / NBRC 100127 / Av18)).